The sequence spans 443 residues: Eukaryotic translation initiation factor 3 subunit M (443 aa).

A PCI domain is found at 205–375 (GLYQSTGNLA…SLIRIHSISS (171 aa)). Positions 413–443 (ETVAQQGLGQQRRGGKRREEKKEKEDKEEQE) are disordered. Over residues 429 to 443 (RREEKKEKEDKEEQE) the composition is skewed to basic and acidic residues.

This sequence belongs to the eIF-3 subunit M family. In terms of assembly, component of the eukaryotic translation initiation factor 3 (eIF-3) complex.

Its subcellular location is the cytoplasm. In terms of biological role, component of the eukaryotic translation initiation factor 3 (eIF-3) complex, which is involved in protein synthesis of a specialized repertoire of mRNAs and, together with other initiation factors, stimulates binding of mRNA and methionyl-tRNAi to the 40S ribosome. The eIF-3 complex specifically targets and initiates translation of a subset of mRNAs involved in cell proliferation. The sequence is that of Eukaryotic translation initiation factor 3 subunit M from Cryptococcus neoformans var. neoformans serotype D (strain B-3501A) (Filobasidiella neoformans).